Consider the following 413-residue polypeptide: Glutaminase (413 aa).

The tract at residues 23–307 (GELADYIPEL…LSDDMGLHLM (285 aa)) is glutaminase. Residues Ser-65, Asn-114, Glu-160, Asn-167, Tyr-191, Tyr-243, and Val-261 each coordinate substrate. The region spanning 316–413 (AVRSITRDGD…SDGTICKERV (98 aa)) is the STAS domain.

Belongs to the glutaminase family. As to quaternary structure, homotetramer.

The enzyme catalyses L-glutamine + H2O = L-glutamate + NH4(+). This is Glutaminase (glsA) from Corynebacterium glutamicum (strain ATCC 13032 / DSM 20300 / JCM 1318 / BCRC 11384 / CCUG 27702 / LMG 3730 / NBRC 12168 / NCIMB 10025 / NRRL B-2784 / 534).